The sequence spans 188 residues: Peroxynitrite isomerase (188 aa).

Positions 35-41 (GTWRGEG) match the GXWXGXG motif. Residue His178 coordinates heme b.

It belongs to the nitrobindin family. In terms of assembly, homodimer. Heme b serves as cofactor.

The enzyme catalyses peroxynitrite = nitrate. The protein operates within nitrogen metabolism. Heme-binding protein able to scavenge peroxynitrite and to protect free L-tyrosine against peroxynitrite-mediated nitration, by acting as a peroxynitrite isomerase that converts peroxynitrite to nitrate. Therefore, this protein likely plays a role in peroxynitrite sensing and in the detoxification of reactive nitrogen and oxygen species (RNS and ROS, respectively). Is able to bind nitric oxide (NO) in vitro, but may act as a sensor of peroxynitrite levels in vivo. This is Peroxynitrite isomerase from Frankia casuarinae (strain DSM 45818 / CECT 9043 / HFP020203 / CcI3).